The primary structure comprises 280 residues: Pantothenate synthetase (280 aa).

Residue 26–33 (MGNLHEGH) participates in ATP binding. Catalysis depends on His33, which acts as the Proton donor. Gln57 provides a ligand contact to (R)-pantoate. Gln57 is a binding site for beta-alanine. 145 to 148 (GKKD) lines the ATP pocket. Residue Gln151 coordinates (R)-pantoate. ATP is bound by residues Val174 and 182–185 (LSSR).

The protein belongs to the pantothenate synthetase family. As to quaternary structure, homodimer.

The protein resides in the cytoplasm. It catalyses the reaction (R)-pantoate + beta-alanine + ATP = (R)-pantothenate + AMP + diphosphate + H(+). It participates in cofactor biosynthesis; (R)-pantothenate biosynthesis; (R)-pantothenate from (R)-pantoate and beta-alanine: step 1/1. Catalyzes the condensation of pantoate with beta-alanine in an ATP-dependent reaction via a pantoyl-adenylate intermediate. This is Pantothenate synthetase from Bordetella avium (strain 197N).